Reading from the N-terminus, the 328-residue chain is Eukaryotic translation initiation factor 3 subunit I (328 aa).

WD repeat units follow at residues 8–49, 50–89, 146–185, 191–230, and 288–327; these read GHER…GTYR, GHNGAVWCCDVSRDSSRLITGSADQTAKLWDVKSGKELFT, DGKKRINRAVWGPLNQTIVSGGEDKVIRIWDAETGKLLKQ, GHKKDITSLCKAADDSHFLTGSLDKTAKLWDMRTLTLLKT, and GHFGPINALAFNPDGKSFSSGGEDGYVRLHHFDSDYFNIK.

The protein belongs to the eIF-3 subunit I family. Component of the eukaryotic translation initiation factor 3 (eIF-3) complex.

It localises to the cytoplasm. Its function is as follows. Component of the eukaryotic translation initiation factor 3 (eIF-3) complex, which is involved in protein synthesis of a specialized repertoire of mRNAs and, together with other initiation factors, stimulates binding of mRNA and methionyl-tRNAi to the 40S ribosome. The eIF-3 complex specifically targets and initiates translation of a subset of mRNAs involved in cell proliferation. This chain is Eukaryotic translation initiation factor 3 subunit I (TIF3I1), found in Arabidopsis thaliana (Mouse-ear cress).